Reading from the N-terminus, the 519-residue chain is Ribonuclease Y (519 aa).

Residues 3-23 (LLSLLLILLGIILGVVVGYIV) form a helical membrane-spanning segment. Residues 209-269 (TVSVVNLPND…IRREIARTAL (61 aa)) enclose the KH domain. The HD domain maps to 335-428 (VLKHSIEVAH…VAAADALSAA (94 aa)).

This sequence belongs to the RNase Y family.

The protein localises to the cell membrane. Endoribonuclease that initiates mRNA decay. The chain is Ribonuclease Y from Staphylococcus epidermidis (strain ATCC 35984 / DSM 28319 / BCRC 17069 / CCUG 31568 / BM 3577 / RP62A).